We begin with the raw amino-acid sequence, 149 residues long: Large ribosomal subunit protein uL15 (149 aa).

A compositionally biased stretch (basic and acidic residues) spans 1–12 (MSEPIKLHDLRP). Positions 1 to 55 (MSEPIKLHDLRPAKGANKPKTRVGRGEASKGKTAGRGTKGTKARKQVSAAFEGGQ) are disordered.

This sequence belongs to the universal ribosomal protein uL15 family. Part of the 50S ribosomal subunit.

Functionally, binds to the 23S rRNA. This chain is Large ribosomal subunit protein uL15, found in Corynebacterium kroppenstedtii (strain DSM 44385 / JCM 11950 / CIP 105744 / CCUG 35717).